The chain runs to 317 residues: Inactive serine protease 45 (317 aa).

A signal peptide spans Met1–Leu35. Asn40 carries N-linked (GlcNAc...) asparagine glycosylation. The Peptidase S1 domain maps to Pro44–Ser291. A disulfide bridge connects residues Cys75 and Cys91. Residue Asn110 is glycosylated (N-linked (GlcNAc...) asparagine). Cystine bridges form between Cys172–Cys249, Cys207–Cys230, and Cys239–Cys267. A glycan (N-linked (GlcNAc...) asparagine) is linked at Asn272.

The protein belongs to the peptidase S1 family.

The protein localises to the secreted. This chain is Inactive serine protease 45, found in Mus musculus (Mouse).